The primary structure comprises 188 residues: MATIIQAKDLRAGHTFLYKGNIYQVIENSFNKTAMREGIVKCKVKNLRTGAITIEVLTGEKLEQAVIEKSKMTFSYDDGSGYVFMDNDTYEQISIPYSQLSWEKNFIEEGTEVSVMRYDGELMGVSLPDQLVVTIIEAEEAVQGNSVQNATKRAWLESKWEFQVPQFIKSGEKVIINPSNGQYVGRAK.

It belongs to the elongation factor P family.

Its subcellular location is the cytoplasm. It participates in protein biosynthesis; polypeptide chain elongation. In terms of biological role, involved in peptide bond synthesis. Stimulates efficient translation and peptide-bond synthesis on native or reconstituted 70S ribosomes in vitro. Probably functions indirectly by altering the affinity of the ribosome for aminoacyl-tRNA, thus increasing their reactivity as acceptors for peptidyl transferase. This Ureaplasma parvum serovar 3 (strain ATCC 700970) protein is Elongation factor P (efp).